The following is a 71-amino-acid chain: Omega-conotoxin-like Ac6.4 (71 aa).

The N-terminal stretch at 1–22 (MKLTCVVIVAVLLLTACQLLTA) is a signal peptide. Residues 23 to 45 (DDSRGTQKHRALRSDTKLSMSTR) constitute a propeptide that is removed on maturation. 3 disulfides stabilise this stretch: Cys46–Cys61, Cys53–Cys65, and Cys60–Cys70. Cys70 carries the post-translational modification Cysteine amide.

This sequence belongs to the conotoxin O1 superfamily. As to expression, expressed by the venom duct.

The protein resides in the secreted. Functionally, omega-conotoxins act at presynaptic membranes, they bind and block voltage-gated calcium channels (Cav). The protein is Omega-conotoxin-like Ac6.4 of Conus achatinus (Little frog cone).